A 275-amino-acid polypeptide reads, in one-letter code: Large ribosomal subunit protein uL2c (275 aa).

Disordered stretches follow at residues 1-30 (MAIHLYKTSTPSTRNGAVDSQAKSTPQKQK) and 225-275 (MNPV…RRRK). Over residues 21-30 (QAKSTPQKQK) the composition is skewed to polar residues.

It belongs to the universal ribosomal protein uL2 family. Part of the 50S ribosomal subunit.

It localises to the plastid. The protein localises to the chloroplast. The protein is Large ribosomal subunit protein uL2c (rpl2) of Illicium oligandrum (Star anise).